Consider the following 229-residue polypeptide: Type-5 uracil-DNA glycosylase (229 aa).

Residues C19, C22, C123, and C138 each contribute to the [4Fe-4S] cluster site.

This sequence belongs to the uracil-DNA glycosylase (UDG) superfamily. Type 5 (UDGb) family.

DNA glycosylase with broad substrate specificity. This Mycobacterium leprae (strain TN) protein is Type-5 uracil-DNA glycosylase.